A 150-amino-acid chain; its full sequence is Monooxygenase nsrS (150 aa).

This sequence belongs to the avfA family.

It functions in the pathway secondary metabolite biosynthesis. Functionally, monooxygenase; part of the gene cluster that mediates the biosynthesis of the tetrahydroxanthone dimer neosartorin, which exhibits antibacterial activity. The two different monomeric units appear to be synthesized by the same set of enzymes, among which the Baeyer-Villiger monooxygenase nsrF is the key enzyme for the divergence of the biosynthetic routes. The pathway begins with the synthesis of atrochrysone thioester by the polyketide synthase nsrB. The atrochrysone carboxyl ACP thioesterase nsrC then breaks the thioester bond and releases the atrochrysone carboxylic acid from AacuL. Atrochrysone carboxylic acid is decarboxylated by the decarboxylase nsrE, and oxidized by the anthrone oxygenase nsrD to yield emodin. Emodin is then reduced to emodin hydroquinone by the oxidoreductase nsrR. A-ring reduction by the short chain dehydrogenase nsrJ, dehydration by the scytalone dehydratase-like protein nsrI and probable spontaneous re-oxidation, results in overall deoxygenation to chrysophanol. The Baeyer-Villiger monooxygenase nsrF accepts chrysophanol as a substrate to insert one oxygen atom at two different positions to yield the precursors of both monomric units. NsrF is promiscuous/flexible in interacting with the 2 (non methylated and methylated) aromatic rings of chrysophanol, thus diverging the biosynthetic pathway at this point. After the hydrolysis of the lactones, methylesterification by the methyltransferase nsrG yields respectively moniliphenone and 2,2',6'-trihydroxy-4-methyl-6-methoxya-cyldiphenylmethanone. The next steps are the hydroxylation by the FAD-dependent monooxygenase nsrK, followed by isomerization by the monooxygenase nsrQ. The short chain dehydrogenase/reductase nsrO then catalyzes the C-5 ketoreduction to give the xanthone skeleton of blennolide C and 5-acetylblennolide A. The acetyltransferase nsrL has a strict substrate specificity and uses only blennolide A but not blennolide C to yield 5-acetylblennolide A as the single-acetylated product. In the final step of the biosynthesis, the heterodimerization of the 2 xanthones, blennolide C and 5-acetylblennolide A, is catalyzed by the cytochrome P450 monooxygenase nsrP. NsrP can utilize at least three different xanthones as its substrates to perform the dimerization reaction. The polypeptide is Monooxygenase nsrS (Aspergillus novofumigatus (strain IBT 16806)).